A 311-amino-acid chain; its full sequence is Coproporphyrin III ferrochelatase (311 aa).

Fe-coproporphyrin III-binding positions include Tyr12, Arg29, 45-46, Ser53, and Tyr124; that span reads RY. 2 residues coordinate Fe(2+): His182 and Glu263.

It belongs to the ferrochelatase family.

Its subcellular location is the cytoplasm. The catalysed reaction is Fe-coproporphyrin III + 2 H(+) = coproporphyrin III + Fe(2+). The protein operates within porphyrin-containing compound metabolism; protoheme biosynthesis. Functionally, involved in coproporphyrin-dependent heme b biosynthesis. Catalyzes the insertion of ferrous iron into coproporphyrin III to form Fe-coproporphyrin III. This is Coproporphyrin III ferrochelatase from Bacillus mycoides (strain KBAB4) (Bacillus weihenstephanensis).